The following is a 587-amino-acid chain: Protein SIX6OS1 (587 aa).

The disordered stretch occupies residues 356-378; the sequence is TPQKQSNSNQWSEKGDKDAEYGD. The span at 357–367 shows a compositional bias: polar residues; it reads PQKQSNSNQWS. The span at 368–378 shows a compositional bias: basic and acidic residues; it reads EKGDKDAEYGD. Phosphoserine is present on serine 439. Residues 568-587 are disordered; sequence SSSLKGFSSSSQNTTQFTFF.

As to quaternary structure, interacts with SYCE1. Interacts with proteasome subunit PSMA8; to participate in meiosis progression during spermatogenesis. As to expression, highest expression in retina, skeletal muscle, testis and colon.

It localises to the chromosome. Its function is as follows. Meiotic protein that localizes to the central element of the synaptonemal complex and is required for chromosome synapsis during meiotic recombination. Required for the appropriate processing of intermediate recombination nodules before crossover formation. This Homo sapiens (Human) protein is Protein SIX6OS1.